We begin with the raw amino-acid sequence, 220 residues long: Uracil-DNA glycosylase (220 aa).

D60 serves as the catalytic Proton acceptor.

The protein belongs to the uracil-DNA glycosylase (UDG) superfamily. UNG family.

The protein resides in the cytoplasm. The catalysed reaction is Hydrolyzes single-stranded DNA or mismatched double-stranded DNA and polynucleotides, releasing free uracil.. Functionally, excises uracil residues from the DNA which can arise as a result of misincorporation of dUMP residues by DNA polymerase or due to deamination of cytosine. This Francisella tularensis subsp. tularensis (strain FSC 198) protein is Uracil-DNA glycosylase.